The following is a 334-amino-acid chain: Protein-methionine-sulfoxide reductase catalytic subunit MsrP (334 aa).

Residues 1–44 constitute a signal peptide (tat-type signal); sequence MKKIRPLTEADVTAESAFFMQRRQVLKALGISAAALSLPSTAQA. Mo-molybdopterin-binding positions include N88, 91–92, C146, T181, N233, R238, and 249–251; these read YE and GIK.

Belongs to the MsrP family. In terms of assembly, heterodimer of a catalytic subunit (MsrP) and a heme-binding subunit (MsrQ). The cofactor is Mo-molybdopterin. Predicted to be exported by the Tat system. The position of the signal peptide cleavage has not been experimentally proven.

The protein resides in the periplasm. The enzyme catalyses L-methionyl-[protein] + a quinone + H2O = L-methionyl-(S)-S-oxide-[protein] + a quinol. It carries out the reaction L-methionyl-[protein] + a quinone + H2O = L-methionyl-(R)-S-oxide-[protein] + a quinol. Functionally, part of the MsrPQ system that repairs oxidized periplasmic proteins containing methionine sulfoxide residues (Met-O), using respiratory chain electrons. Thus protects these proteins from oxidative-stress damage caused by reactive species of oxygen and chlorine generated by the host defense mechanisms. MsrPQ is essential for the maintenance of envelope integrity under bleach stress, rescuing a wide series of structurally unrelated periplasmic proteins from methionine oxidation, including the primary periplasmic chaperone SurA and the lipoprotein Pal. The catalytic subunit MsrP is non-stereospecific, being able to reduce both (R-) and (S-) diastereoisomers of methionine sulfoxide. In Salmonella newport (strain SL254), this protein is Protein-methionine-sulfoxide reductase catalytic subunit MsrP.